The following is a 285-amino-acid chain: Bifunctional protein FolD 2 (285 aa).

NADP(+) contacts are provided by residues 164-166 (GRS), Ser-189, and Val-230.

The protein belongs to the tetrahydrofolate dehydrogenase/cyclohydrolase family. As to quaternary structure, homodimer.

It catalyses the reaction (6R)-5,10-methylene-5,6,7,8-tetrahydrofolate + NADP(+) = (6R)-5,10-methenyltetrahydrofolate + NADPH. The enzyme catalyses (6R)-5,10-methenyltetrahydrofolate + H2O = (6R)-10-formyltetrahydrofolate + H(+). The protein operates within one-carbon metabolism; tetrahydrofolate interconversion. Catalyzes the oxidation of 5,10-methylenetetrahydrofolate to 5,10-methenyltetrahydrofolate and then the hydrolysis of 5,10-methenyltetrahydrofolate to 10-formyltetrahydrofolate. In Geobacter metallireducens (strain ATCC 53774 / DSM 7210 / GS-15), this protein is Bifunctional protein FolD 2.